The following is an 83-amino-acid chain: Short neurotoxin B (83 aa).

Positions methionine 1–threonine 21 are cleaved as a signal peptide. 4 disulfides stabilise this stretch: cysteine 24-cysteine 45, cysteine 38-cysteine 62, cysteine 64-cysteine 75, and cysteine 76-cysteine 81.

It belongs to the three-finger toxin family. Short-chain subfamily. Type I alpha-neurotoxin sub-subfamily. Expressed by the venom gland.

Its subcellular location is the secreted. Binds to muscle nicotinic acetylcholine receptor (nAChR) and inhibit acetylcholine from binding to the receptor, thereby impairing neuromuscular transmission. The protein is Short neurotoxin B of Laticauda laticaudata (Blue-ringed sea krait).